The chain runs to 355 residues: MNNFAKIFQSNWIDLNKLGKLEIFLKTISGIYKAPNRTHLLAHAADISSFYAVKNIYEYMKNDDEGKVILKNKPLLIRQDIQFNELKKLPKNTLGYKYMEFLEAYKLHAHDREAAHFFDDINYSYILTRYRQIHDIGHVVYNLNISIESEAALKMIELIHTKLPITLLAILVAPFMTPLYRFQYIFKDKIPPNFLNPNFDYTYKDDYNYIDELSLKQYVYNLTEYFHIDKIDNNIFFQKLYKYYFDNLNNSNNIRGTIIYGYNNEDNNDIIFDDINNEYIFLKNPEKNYFLFKYKPRQTLLKQLYPWAYMAGMAATKPLHSIHIENWLDKDIDLFRKTYNIIPLPDHLNLMSGIN.

Residues histidine 134, aspartate 135, histidine 138, and glutamate 150 each coordinate Zn(2+).

The protein belongs to the COQ4 family. Component of a multi-subunit COQ enzyme complex. The cofactor is Zn(2+).

Its subcellular location is the mitochondrion inner membrane. It carries out the reaction a 4-hydroxy-3-methoxy-5-(all-trans-polyprenyl)benzoate + H(+) = a 2-methoxy-6-(all-trans-polyprenyl)phenol + CO2. Its pathway is cofactor biosynthesis; ubiquinone biosynthesis. Its function is as follows. Lyase that catalyzes the C1-decarboxylation of 4-hydroxy-3-methoxy-5-(all-trans-polyprenyl)benzoic acid into 2-methoxy-6-(all-trans-polyprenyl)phenol during ubiquinone biosynthesis. The protein is Ubiquinone biosynthesis protein COQ4 homolog, mitochondrial of Plasmodium chabaudi chabaudi.